Here is a 1927-residue protein sequence, read N- to C-terminus: Lactase/phlorizin hydrolase (1927 aa).

A signal peptide spans Met1–Gly19. A propeptide spans Ser20–Arg868 (XBetaGly). Topologically, residues Ser20–Thr1882 are extracellular. Asn42 carries N-linked (GlcNAc...) asparagine glycosylation. Residues Ser44–Cys286 are glycosyl hydrolase-1 1; Region I. A glycosyl hydrolase-1 2; Region II region spans residues Ile362–Leu855. N-linked (GlcNAc...) asparagine glycosylation is found at Asn368, Asn418, Asn512, Asn821, Asn934, Asn946, and Asn989. The tract at residues Thr902–Leu1366 is glycosyl hydrolase-1 3; Region III. Phlorizin hydrolase/glycosylceramidase activity. Catalysis depends on Glu1065, which acts as the Proton donor; for phlorizin hydrolase/Glycosylceramidase activity. An N-linked (GlcNAc...) asparagine glycan is attached at Asn1174. The tract at residues Arg1220 to Ala1244 is disordered. A compositionally biased stretch (acidic residues) spans Tyr1226–Pro1238. Residue Glu1273 is the Nucleophile; for phlorizin hydrolase/Glycosylceramidase activity of the active site. N-linked (GlcNAc...) asparagine glycosylation is found at Asn1340 and Asn1508. Residues Leu1373–Gly1846 are glycosyl hydrolase-1 4; Region IV. Lactase activity. The Proton donor; for lactase activity role is filled by Glu1538. The segment at Arg1647–Phe1927 is required for homodimerization and transport to the plasma membrane. 2 N-linked (GlcNAc...) asparagine glycosylation sites follow: Asn1656 and Asn1672. Catalysis depends on Glu1749, which acts as the Nucleophile; for lactase activity. N-linked (GlcNAc...) asparagine glycosylation is found at Asn1761 and Asn1814. Residues Ala1883–Leu1901 traverse the membrane as a helical segment. The Cytoplasmic segment spans residues Ser1902–Phe1927.

Belongs to the glycosyl hydrolase 1 family. In terms of assembly, homodimer. Post-translationally, N-glycosylated. Specifically expressed in small intestine.

The protein localises to the apical cell membrane. It carries out the reaction lactose + H2O = beta-D-galactose + D-glucose. The enzyme catalyses phlorizin + H2O = phloretin + beta-D-glucose. It catalyses the reaction D-cellobiose + H2O = beta-D-glucose + D-glucose. The catalysed reaction is quercetin 4'-O-beta-D-glucoside + H2O = quercetin + beta-D-glucose. It carries out the reaction quercetin 3-O-beta-D-glucoside + H2O = quercetin + beta-D-glucose. The enzyme catalyses kaempferol 3-O-beta-D-glucoside + H2O = kaempferol + beta-D-glucose. It catalyses the reaction luteolin 7-O-beta-D-glucoside + H2O = luteolin + beta-D-glucose. The catalysed reaction is luteolin 4'-O-beta-D-glucoside + H2O = luteolin + beta-D-glucose. It carries out the reaction (2S)-naringenin 7-O-beta-D-glucoside + H2O = (2S)-naringenin + beta-D-glucose. The enzyme catalyses eriodictyol-7-O-beta-D-glucoside + H2O = (S)-eriodictyol + beta-D-glucose. It catalyses the reaction apigenin 7-O-beta-D-glucoside + H2O = apigenin + beta-D-glucose. The catalysed reaction is daidzein 7-O-beta-D-glucoside + H2O = daidzein + beta-D-glucose + H(+). It carries out the reaction genistein 7-O-beta-D-glucoside + H2O = genistein + beta-D-glucose. The enzyme catalyses a beta-D-galactosyl-N-acylsphingosine + H2O = a ceramide + beta-D-galactose.. It catalyses the reaction beta-D-glucosyl-(1&lt;-&gt;1')-N-hexadecanoylsphing-4-enine + H2O = N-hexadecanoylsphing-4-enine + beta-D-glucose. The catalysed reaction is beta-D-galactosyl-(1&lt;-&gt;1')-N-hexadecanoylsphing-4-enine + H2O = beta-D-galactose + N-hexadecanoylsphing-4-enine. It carries out the reaction beta-D-galactosyl-(1&lt;-&gt;1')-N-hexadecanoylsphinganine + H2O = N-hexadecanoylsphinganine + beta-D-galactose. The enzyme catalyses beta-D-glucosyl-(1&lt;-&gt;1')-N-hexadecanoylsphinganine + H2O = N-hexadecanoylsphinganine + beta-D-glucose. In terms of biological role, broad specificity glycosidase of the intestinal brush border membrane that hydrolyzes lactose, the main sugar in mammalian milk, to produce D-glucose and D-galactose. The mature protein is composed of two domains that catalyze the hydrolysis of beta-glucopyranosides and beta-galactopyranosides, with a preference for hydrophilic aglycones (in lactose and cellobiose) for one domain and hydrophobic aglycones (in phlorizin and glycosylceramides) for the other. The chain is Lactase/phlorizin hydrolase from Homo sapiens (Human).